The chain runs to 222 residues: ATP-dependent dethiobiotin synthetase BioD 2 (222 aa).

Thr17 is a binding site for Mg(2+). Residue Lys38 is part of the active site. Substrate is bound at residue Thr42. Positions 55 and 112 each coordinate Mg(2+). ATP is bound by residues Asp55, 112 to 115 (EGCG), 172 to 173 (NR), 201 to 203 (PYL), and Glu208.

Belongs to the dethiobiotin synthetase family. As to quaternary structure, homodimer. The cofactor is Mg(2+).

It is found in the cytoplasm. The enzyme catalyses (7R,8S)-7,8-diammoniononanoate + CO2 + ATP = (4R,5S)-dethiobiotin + ADP + phosphate + 3 H(+). Its pathway is cofactor biosynthesis; biotin biosynthesis; biotin from 7,8-diaminononanoate: step 1/2. Catalyzes a mechanistically unusual reaction, the ATP-dependent insertion of CO2 between the N7 and N8 nitrogen atoms of 7,8-diaminopelargonic acid (DAPA, also called 7,8-diammoniononanoate) to form a ureido ring. In Yersinia pestis, this protein is ATP-dependent dethiobiotin synthetase BioD 2.